Consider the following 1535-residue polypeptide: ABC multidrug transporter atrF (1535 aa).

The interval 1–115 is disordered; that stretch reads MADDHRQPEA…DEQASSTDEY (115 aa). An N-linked (GlcNAc...) asparagine glycan is attached at asparagine 33. Residues 34 to 45 show a composition bias toward low complexity; sequence TTSTSETDASAD. Positions 46–76 are enriched in basic and acidic residues; sequence ADARWGERNQGDPVSRRGAMEEFEEMRREVT. Positions 79–93 are enriched in basic residues; it reads SLHRTRSAKDARRRS. 4 N-linked (GlcNAc...) asparagine glycosylation sites follow: asparagine 149, asparagine 274, asparagine 287, and asparagine 351. The ABC transporter 1 domain occupies 185–427; the sequence is VPALHFGKRP…FVDLGFYCPE (243 aa). 7 helical membrane-spanning segments follow: residues 540-560, 573-593, 618-638, 646-666, 680-700, 703-723, and 791-811; these read LYTKYFIIVSNGLIVSSLFYG, GALFFSILFLVLQLTELMPAV, VVVDFPAIFCMVVPFTIIVYF, ASKFFIYFLFVYTTTFCITSL, AVRFAGIALNVLILFVGYVIP, GLIDGSIWFGWLFYVNPLSYS, and FGVVIAFTVLYLLVTVIAAEV. Residues 834-868 form a disordered region; the sequence is KAQNGKGNDEEQVQNTGDNAALSRGEAKSSSSGEA. An ABC transporter 2 domain is found at 879 to 1117; that stretch reads FTWSNVEYTV…DVIKYFADRG (239 aa). N-linked (GlcNAc...) asparagine glycosylation is present at asparagine 892. 915–922 contributes to the ATP binding site; sequence GASGAGKT. A run of 6 helical transmembrane segments spans residues 1212 to 1232, 1246 to 1266, 1295 to 1315, 1320 to 1340, 1342 to 1362, and 1384 to 1406; these read YGKLFVSVIIGIFNGFTFWML, IFLIILIPPIVLNSIVPKFYI, IPMAIVSALIYWLLWYYPVGF, SSAGYVFLMSMLFFLFQASWG, WICAFAPSFTVISNVLPFFFV, and WMYYVNPVTWWLRGVISSVFPSV. Residue asparagine 1459 is glycosylated (N-linked (GlcNAc...) asparagine). A run of 2 helical transmembrane segments spans residues 1477 to 1497 and 1503 to 1523; these read CFGIFLAFVIINWALVYFFIY and GWSFGMGYLFGGVGVMIEGVK.

This sequence belongs to the ABC transporter superfamily. ABCG family. PDR (TC 3.A.1.205) subfamily.

Its subcellular location is the cell membrane. It catalyses the reaction voriconazole(in) + ATP + H2O = voriconazole(out) + ADP + phosphate + H(+). Functionally, pleiotropic ABC efflux transporter involved in the basal level of azole susceptibility. Confers resistance to voriconazole. This Aspergillus flavus (strain ATCC 200026 / FGSC A1120 / IAM 13836 / NRRL 3357 / JCM 12722 / SRRC 167) protein is ABC multidrug transporter atrF.